Consider the following 508-residue polypeptide: Photosystem II CP47 reaction center protein (508 aa).

The next 6 membrane-spanning stretches (helical) occupy residues 21-36 (SVHI…WAGS), 101-115 (IVFS…IWHW), 140-156 (GIHL…FGAF), 203-218 (IAAG…FHLS), 237-252 (VLSS…AFVV), and 457-472 (SFAL…HGAR).

The protein belongs to the PsbB/PsbC family. PsbB subfamily. In terms of assembly, PSII is composed of 1 copy each of membrane proteins PsbA, PsbB, PsbC, PsbD, PsbE, PsbF, PsbH, PsbI, PsbJ, PsbK, PsbL, PsbM, PsbT, PsbX, PsbY, PsbZ, Psb30/Ycf12, at least 3 peripheral proteins of the oxygen-evolving complex and a large number of cofactors. It forms dimeric complexes. Binds multiple chlorophylls. PSII binds additional chlorophylls, carotenoids and specific lipids. is required as a cofactor.

Its subcellular location is the plastid. It is found in the chloroplast thylakoid membrane. Its function is as follows. One of the components of the core complex of photosystem II (PSII). It binds chlorophyll and helps catalyze the primary light-induced photochemical processes of PSII. PSII is a light-driven water:plastoquinone oxidoreductase, using light energy to abstract electrons from H(2)O, generating O(2) and a proton gradient subsequently used for ATP formation. In Carica papaya (Papaya), this protein is Photosystem II CP47 reaction center protein.